A 425-amino-acid chain; its full sequence is Enolase (425 aa).

Residue Q162 participates in (2R)-2-phosphoglycerate binding. E204 serves as the catalytic Proton donor. Mg(2+)-binding residues include D241, E282, and D309. The (2R)-2-phosphoglycerate site is built by K334, R363, S364, and K385. Catalysis depends on K334, which acts as the Proton acceptor.

The protein belongs to the enolase family. The cofactor is Mg(2+).

It is found in the cytoplasm. The protein resides in the secreted. Its subcellular location is the cell surface. It carries out the reaction (2R)-2-phosphoglycerate = phosphoenolpyruvate + H2O. The protein operates within carbohydrate degradation; glycolysis; pyruvate from D-glyceraldehyde 3-phosphate: step 4/5. Catalyzes the reversible conversion of 2-phosphoglycerate (2-PG) into phosphoenolpyruvate (PEP). It is essential for the degradation of carbohydrates via glycolysis. This chain is Enolase, found in Corynebacterium efficiens (strain DSM 44549 / YS-314 / AJ 12310 / JCM 11189 / NBRC 100395).